Consider the following 215-residue polypeptide: Ribosomal RNA small subunit methyltransferase G (215 aa).

S-adenosyl-L-methionine is bound by residues G73, L78, 125–126 (AE), and R140.

This sequence belongs to the methyltransferase superfamily. RNA methyltransferase RsmG family.

The protein resides in the cytoplasm. Specifically methylates the N7 position of guanine in position 518 of 16S rRNA. This chain is Ribosomal RNA small subunit methyltransferase G, found in Renibacterium salmoninarum (strain ATCC 33209 / DSM 20767 / JCM 11484 / NBRC 15589 / NCIMB 2235).